The sequence spans 507 residues: Maturase K (507 aa).

It belongs to the intron maturase 2 family. MatK subfamily.

It localises to the plastid. The protein localises to the chloroplast. Its function is as follows. Usually encoded in the trnK tRNA gene intron. Probably assists in splicing its own and other chloroplast group II introns. This Euryale ferox (Gorgon plant) protein is Maturase K.